Consider the following 95-residue polypeptide: Large ribosomal subunit protein uL22c (95 aa).

Belongs to the universal ribosomal protein uL22 family. Part of the 50S ribosomal subunit.

It is found in the plastid. Its subcellular location is the chloroplast. In terms of biological role, this protein binds specifically to 23S rRNA. The globular domain of the protein is located near the polypeptide exit tunnel on the outside of the subunit, while an extended beta-hairpin is found that lines the wall of the exit tunnel in the center of the 70S ribosome. This Cyanidioschyzon merolae (strain NIES-3377 / 10D) (Unicellular red alga) protein is Large ribosomal subunit protein uL22c (rpl22).